The sequence spans 487 residues: N-succinylglutamate 5-semialdehyde dehydrogenase (487 aa).

NAD(+) is bound at residue 221–226; that stretch reads GSSRTG. Catalysis depends on residues Glu244 and Cys278.

It belongs to the aldehyde dehydrogenase family. AstD subfamily.

The catalysed reaction is N-succinyl-L-glutamate 5-semialdehyde + NAD(+) + H2O = N-succinyl-L-glutamate + NADH + 2 H(+). The protein operates within amino-acid degradation; L-arginine degradation via AST pathway; L-glutamate and succinate from L-arginine: step 4/5. Functionally, catalyzes the NAD-dependent reduction of succinylglutamate semialdehyde into succinylglutamate. This is N-succinylglutamate 5-semialdehyde dehydrogenase from Pseudomonas putida (strain GB-1).